The sequence spans 370 residues: tRNA-specific 2-thiouridylase MnmA (370 aa).

Residues 8 to 15 (GMSGGVDS) and Met34 each bind ATP. The interval 104–106 (NPD) is interaction with target base in tRNA. The active-site Nucleophile is Cys109. Cys109 and Cys202 are oxidised to a cystine. ATP is bound at residue Gly134. An interaction with tRNA region spans residues 152–154 (KDQ). The active-site Cysteine persulfide intermediate is Cys202. Positions 309-310 (RY) are interaction with tRNA.

It belongs to the MnmA/TRMU family.

Its subcellular location is the cytoplasm. It catalyses the reaction S-sulfanyl-L-cysteinyl-[protein] + uridine(34) in tRNA + AH2 + ATP = 2-thiouridine(34) in tRNA + L-cysteinyl-[protein] + A + AMP + diphosphate + H(+). Catalyzes the 2-thiolation of uridine at the wobble position (U34) of tRNA, leading to the formation of s(2)U34. This Metamycoplasma arthritidis (strain 158L3-1) (Mycoplasma arthritidis) protein is tRNA-specific 2-thiouridylase MnmA.